Reading from the N-terminus, the 636-residue chain is Multicopper oxidase CTB12 (636 aa).

The first 23 residues, 1-23, serve as a signal peptide directing secretion; it reads MWSVRLYPLALTLLFQCVSPAAA. The region spanning 62–168 is the Plastocyanin-like 1 domain; the sequence is AGIGFREAIF…LYGAVVIAPD (107 aa). Residues histidine 104 and histidine 106 each contribute to the Cu cation site. Asparagine 136 carries an N-linked (GlcNAc...) asparagine glycan. Residues histidine 148 and histidine 150 each contribute to the Cu cation site. Residue asparagine 304 is glycosylated (N-linked (GlcNAc...) asparagine). The region spanning 318–381 is the Plastocyanin-like 2 domain; it reads LTFVNPGGLY…QEKARHVVRV (64 aa). A glycan (N-linked (GlcNAc...) asparagine) is linked at asparagine 472. The 128-residue stretch at 486–613 folds into the Plastocyanin-like 3 domain; that stretch reads NVEDVPATEL…GGMGMVVLDG (128 aa). Residues histidine 519, histidine 522, and histidine 524 each contribute to the Cu cation site. Asparagine 576 carries N-linked (GlcNAc...) asparagine glycosylation. Cu cation-binding residues include histidine 595, cysteine 596, histidine 597, and histidine 601.

It belongs to the multicopper oxidase family.

Its pathway is mycotoxin biosynthesis. Functionally, multicopper oxidase; part of the gene cluster that mediates the biosynthesis of cercosporin, a light-activated, non-host-selective toxin. The perylenequinone chromophore of cercosporin absorbs light energy to attain an electronically-activated triplet state and produces active oxygen species such as the hydroxyl radical, superoxide, hydrogen peroxide or singlet oxygen upon reaction with oxygen molecules. These reactive oxygen species cause damage to various cellular components including lipids, proteins and nucleic acids. The first step of cercosporin biosynthesis is performed by the polyketide synthase CTB1 which catalyzes the formation of nor-toralactone. The starter unit acyltransferase (SAT) domain of CTB1 initiates polyketide extension by the selective utilization of acetyl-CoA, which is elongated to the heptaketide in the beta-ketoacyl synthase (KS) domain by successive condensations with six malonyl units introduced by the malonyl acyltransferase (MAT) domain. The product template (PT) domain catalyzes C4-C9 and C2-C11 aldol cyclizations and dehydrations to a trihydroxynaphthalene, which is thought to be delivered to the thioesterase (TE) domain for product release. The bifunctional enzyme CTB3 then methylates nor-toralactone to toralactone before conducting an unusual oxidative aromatic ring opening. The O-methyltransferase CTB2 further methylates the nascent OH-6 of the CBT3 product, blocking further oxidation at this site before the reductase CTB6 reduces the 2-oxopropyl ketone at position C7, giving naphthalene. The FAD-dependent monooxygenase CTB5 in concert with the multicopper oxidase CTB12 are responsible for homodimerization of naphthalene with CTB7 installing the dioxepine moiety, finally producing cercosporin. The fasciclin domain-containing protein CTB11 might act with CTB5 and CTB12 whereas the roles of CTB9 and CTB10 have still to be elucidated. This is Multicopper oxidase CTB12 from Cercospora beticola (Sugarbeet leaf spot fungus).